Reading from the N-terminus, the 558-residue chain is Germacrene A synthase short form (558 aa).

5 residues coordinate Mg(2+): aspartate 311, aspartate 315, aspartate 455, threonine 459, and glutamate 463. A DDXXD motif motif is present at residues 311–315 (DDTYD).

Belongs to the terpene synthase family. Requires Mg(2+) as cofactor. As to expression, expressed in roots and in green and etiolated seedlings.

The enzyme catalyses (2E,6E)-farnesyl diphosphate = (+)-(R)-germacrene A + diphosphate. It functions in the pathway secondary metabolite biosynthesis; terpenoid biosynthesis. Its function is as follows. Involved in sesquiterpene lactone biosynthesis. Produces exclusively (+)-germacrene A. The sequence is that of Germacrene A synthase short form from Cichorium intybus (Chicory).